The primary structure comprises 438 residues: Ribosomal protein uS12 methylthiotransferase RimO (438 aa).

Residues 1-116 (MNVGFISLGC…IWKEIENLLD (116 aa)) form the MTTase N-terminal domain. Cysteine 10, cysteine 46, cysteine 79, cysteine 147, cysteine 151, and cysteine 154 together coordinate [4Fe-4S] cluster. The 231-residue stretch at 133-363 (TTGSNMAYLK…MALQEKISRE (231 aa)) folds into the Radical SAM core domain. In terms of domain architecture, TRAM spans 366 to 435 (EQKVGNVYKV…DYDLFGELYT (70 aa)).

Belongs to the methylthiotransferase family. RimO subfamily. The cofactor is [4Fe-4S] cluster.

It localises to the cytoplasm. It catalyses the reaction L-aspartate(89)-[ribosomal protein uS12]-hydrogen + (sulfur carrier)-SH + AH2 + 2 S-adenosyl-L-methionine = 3-methylsulfanyl-L-aspartate(89)-[ribosomal protein uS12]-hydrogen + (sulfur carrier)-H + 5'-deoxyadenosine + L-methionine + A + S-adenosyl-L-homocysteine + 2 H(+). Functionally, catalyzes the methylthiolation of an aspartic acid residue of ribosomal protein uS12. This chain is Ribosomal protein uS12 methylthiotransferase RimO, found in Alkaliphilus oremlandii (strain OhILAs) (Clostridium oremlandii (strain OhILAs)).